The primary structure comprises 612 residues: MSTSFQEFKAFCNKVGLDFQWLNLQSSKSVPESGSSEGFSAVSDTVQENIRPATEPLNVNQSKDPVSNFFYDVKNAPLWNVYKRNHSGHSSTEACSGVSSGQASKNIPEAMVKETVLSNHDNVTIINELLPTSSAMHQEESTAMTTSYLLSHSVNDSCNVMLSSSSHNRAMLPPSLVQRNNATTSPTTDSASENNESVPSLTSSVSTSSSVYSSWNPPHSPHISSFPDGNFASLNAEVTCFDFRRTKDSRTKETNESIIPTEIYCPINSTDHHKHYPSQKSKQDACAPAPRNQNISCSVGSAAEFSQSNHTLTTVVPSYMQQYLDRPQNWFESKMGKYCPLFLRSTKNIDYDSLEFKFERKMIAVQYLLLDEQSEPRRYYNPSNKSIPFWKRPFNFDTMPSYDQLMEEAECRFYSYQYKYEGFQRIEPYSIFCPWKNTQREIDLVLDHIHFSLDVGEKKSLNRKGNITLDTLDSKVDPNIQIKPYQIFPSNNLVYEGLPHPAEQSLILSPGTSLIERAFQALIDICKESIPPSNDCTTRNHNSAPQLTVPEPSKPCRLLLVRESRTATELETNKKLWLHSQRRNIEVTVPMHPSEHGTKSRLRKWLSTFVHQ.

The tract at residues 171-217 is disordered; sequence MLPPSLVQRNNATTSPTTDSASENNESVPSLTSSVSTSSSVYSSWNP. Residues 177 to 196 show a composition bias toward polar residues; it reads VQRNNATTSPTTDSASENNE. The span at 197-214 shows a compositional bias: low complexity; it reads SVPSLTSSVSTSSSVYSS.

The protein to yeast YNL018c.

This is an uncharacterized protein from Saccharomyces cerevisiae (strain ATCC 204508 / S288c) (Baker's yeast).